The primary structure comprises 92 residues: Putative septation protein SpoVG (92 aa).

It belongs to the SpoVG family.

In terms of biological role, could be involved in septation. This is Putative septation protein SpoVG from Thermoanaerobacter pseudethanolicus (strain ATCC 33223 / 39E) (Clostridium thermohydrosulfuricum).